The following is a 279-amino-acid chain: Bifunctional protein FolD (279 aa).

NADP(+) is bound by residues 165–167 (GRS), Ser-190, and Ile-231.

It belongs to the tetrahydrofolate dehydrogenase/cyclohydrolase family. In terms of assembly, homodimer.

It carries out the reaction (6R)-5,10-methylene-5,6,7,8-tetrahydrofolate + NADP(+) = (6R)-5,10-methenyltetrahydrofolate + NADPH. The catalysed reaction is (6R)-5,10-methenyltetrahydrofolate + H2O = (6R)-10-formyltetrahydrofolate + H(+). It participates in one-carbon metabolism; tetrahydrofolate interconversion. Functionally, catalyzes the oxidation of 5,10-methylenetetrahydrofolate to 5,10-methenyltetrahydrofolate and then the hydrolysis of 5,10-methenyltetrahydrofolate to 10-formyltetrahydrofolate. The polypeptide is Bifunctional protein FolD (Halalkalibacterium halodurans (strain ATCC BAA-125 / DSM 18197 / FERM 7344 / JCM 9153 / C-125) (Bacillus halodurans)).